The following is a 789-amino-acid chain: DEAD-box ATP-dependent RNA helicase 28 (789 aa).

Residues 1 to 152 (MPSSFFFEDA…AEYKPEDATP (152 aa)) form a disordered region. Positions 13 to 66 (DELELIRNQEDSSEEDVKEGEAEEHEAGEDEDGEEEYEEEDDDEEEEDEKRKRD) form a coiled coil. Acidic residues predominate over residues 23–60 (DSSEEDVKEGEAEEHEAGEDEDGEEEYEEEDDDEEEED). A compositionally biased stretch (basic and acidic residues) spans 83 to 99 (GEEHARRHTTSIDEKIS). A coiled-coil region spans residues 110 to 135 (SINEEEEEEEEEEDASDAETDKQEEY). A compositionally biased stretch (acidic residues) spans 112–127 (NEEEEEEEEEEDASDA). The Q motif signature appears at 167-195 (DTFMELNLSRPLLRACETLGYKKPTPIQA). The 175-residue stretch at 198-372 (IPLALTGRDL…KLSLNKPLRL (175 aa)) folds into the Helicase ATP-binding domain. 211–218 (AITGSGKT) serves as a coordination point for ATP. Residues 320–323 (DEAD) carry the DEAD box motif. A Helicase C-terminal domain is found at 402-546 (VLLSLCTRTF…SRVIPEQSIV (145 aa)). 2 coiled-coil regions span residues 563–591 (ISAE…HRDE) and 628–677 (SADR…EDEE). The disordered stretch occupies residues 611 to 789 (AQAEKDSAGN…FKSKARYKRR (179 aa)). Residues 628 to 637 (SADRAEDLKM) show a composition bias toward basic and acidic residues. Positions 638–656 (KEKRKREREKNLPRKKRRK) are enriched in basic residues. Acidic residues predominate over residues 665-678 (EDNEGEEEEEDEEG). Composition is skewed to basic and acidic residues over residues 691 to 701 (KKQETDKKGLT), 718 to 734 (RAID…DKKQ), and 743 to 761 (PRGE…EKKQ). Residues 772–789 (PRTKSKNSFKSKARYKRR) show a composition bias toward basic residues.

It belongs to the DEAD box helicase family. DDX27/DRS1 subfamily.

It carries out the reaction ATP + H2O = ADP + phosphate + H(+). The chain is DEAD-box ATP-dependent RNA helicase 28 (RH28) from Arabidopsis thaliana (Mouse-ear cress).